The sequence spans 358 residues: Peptide chain release factor 1 (358 aa).

Gln-235 bears the N5-methylglutamine mark. Residues 284-309 (KVESERSASRKSQVGSGDRSERIRTY) are disordered.

The protein belongs to the prokaryotic/mitochondrial release factor family. Methylated by PrmC. Methylation increases the termination efficiency of RF1.

The protein resides in the cytoplasm. Its function is as follows. Peptide chain release factor 1 directs the termination of translation in response to the peptide chain termination codons UAG and UAA. The protein is Peptide chain release factor 1 of Bartonella tribocorum (strain CIP 105476 / IBS 506).